We begin with the raw amino-acid sequence, 223 residues long: Fibroblast growth factor-binding protein 2 (223 aa).

Positions 1–19 (MKFVPCLLLVTLSCLGTLG) are cleaved as a signal peptide. The tract at residues 23–45 (RQKQGSTGEEFHFQTGGRDSCTM) is disordered. Disulfide bonds link C43-C63, C72-C106, and C81-C117. Residues 120-201 (AGPQAHMQQV…PGGNEEAKKK (82 aa)) form a disordered region. Residues 125–144 (HMQQVTSSLKGSPEPNQQPE) show a composition bias toward polar residues. Over residues 175–186 (AKPTTRPTAKPT) the composition is skewed to low complexity. C206 and C214 are oxidised to a cystine.

This sequence belongs to the fibroblast growth factor-binding protein family. In terms of tissue distribution, expressed in serum, peripheral leukocytes and cytotoxic T-lymphocytes, but not in granulocytes and monocytes (at protein level).

Its subcellular location is the secreted. It is found in the extracellular space. The protein is Fibroblast growth factor-binding protein 2 (FGFBP2) of Homo sapiens (Human).